The sequence spans 284 residues: 4-diphosphocytidyl-2-C-methyl-D-erythritol kinase (284 aa).

Residue Lys-14 is part of the active site. Position 98-108 (98-108) interacts with ATP; that stretch reads PMGGGLGGGSS. Asp-140 is a catalytic residue.

The protein belongs to the GHMP kinase family. IspE subfamily.

The catalysed reaction is 4-CDP-2-C-methyl-D-erythritol + ATP = 4-CDP-2-C-methyl-D-erythritol 2-phosphate + ADP + H(+). It functions in the pathway isoprenoid biosynthesis; isopentenyl diphosphate biosynthesis via DXP pathway; isopentenyl diphosphate from 1-deoxy-D-xylulose 5-phosphate: step 3/6. Catalyzes the phosphorylation of the position 2 hydroxy group of 4-diphosphocytidyl-2C-methyl-D-erythritol. In Shewanella baltica (strain OS185), this protein is 4-diphosphocytidyl-2-C-methyl-D-erythritol kinase.